A 213-amino-acid polypeptide reads, in one-letter code: uncharacterized protein (213 aa).

S-adenosyl-L-methionine is bound by residues glycine 53, glutamate 74, and aspartate 96.

The protein belongs to the methyltransferase superfamily. YrrT family.

In terms of biological role, could be a S-adenosyl-L-methionine-dependent methyltransferase. This is an uncharacterized protein from Bacillus pumilus (strain SAFR-032).